The primary structure comprises 146 residues: Protein MGF 100-3L (146 aa).

Belongs to the asfivirus MGF 100 family.

In terms of biological role, plays a role in virus cell tropism, and may be required for efficient virus replication in macrophages. The polypeptide is Protein MGF 100-3L (Ornithodoros (relapsing fever ticks)).